The sequence spans 985 residues: Rho guanine nucleotide exchange factor 2 (985 aa).

The tract at residues M1–K32 is disordered. The Phorbol-ester/DAG-type zinc-finger motif lies at G39–C86. 5 positions are modified to phosphoserine: S109, S122, S129, S133, and S137. The interval R131 to D161 is interaction with DYNLT1. Position 143 is a phosphoserine; by PAK4 (S143). 5 positions are modified to phosphoserine: S151, S163, S172, S174, and S177. Residues K236–D433 enclose the DH domain. K354 carries the post-translational modification N6-acetyllysine. A PH domain is found at K473–R572. Residues L591 to M619 adopt a coiled-coil conformation. A phosphoserine mark is found at S646 and S649. T680 carries the post-translational modification Phosphothreonine; by MAPK1 or MAPK3. Residues S692, S710, and S781 each carry the phosphoserine modification. T795 bears the Phosphothreonine mark. The stretch at E797–E866 forms a coiled coil. At S885 the chain carries Phosphoserine. Disordered regions lie at residues D890–D909 and H918–S985. Y893 is modified (phosphotyrosine). At S895 the chain carries Phosphoserine; by PAK4. The segment covering R919–D938 has biased composition (basic and acidic residues). Phosphoserine is present on residues S931, S939, and S940. Residues S940–E949 show a composition bias toward acidic residues. Phosphothreonine is present on T944. A phosphoserine mark is found at S946, S951, S952, S955, and S959.

In terms of assembly, found in a complex composed at least of ARHGEF2, NOD2 and RIPK2. Interacts with RIPK2; the interaction mediates tyrosine phosphorylation of RIPK2 by Src kinase CSK. Interacts with RIPK1 and RIPK3. Interacts with YWHAZ/14-3-3 zeta; when phosphorylated at Ser-885. Interacts with the kinases PAK4, AURKA and MAPK1. Interacts with RHOA and RAC1. Interacts with NOD1. Interacts (via the N- terminal zinc finger) with CAPN6 (via domain II). Interacts with DYNLT1. Post-translationally, phosphorylation of Ser-885 by PAK1 induces binding to protein YWHAZ, promoting its relocation to microtubules and the inhibition of its activity. Phosphorylated by AURKA and CDK1 during mitosis, which negatively regulates its activity. Phosphorylation by MAPK1 or MAPK3 increases nucleotide exchange activity. Phosphorylation by PAK4 releases GEF-H1 from the microtubules. Phosphorylated on serine, threonine and tyrosine residues in a RIPK2-dependent manner. Ubiquitous, with the exception of liver tissue. Levels are high in hemopoietic tissues (thymus, spleen, bone marrow) as well as in kidney and lung. Expressed in the germinal zones of both the neocortex and the cerebellum and in the pontine gray nuclei.

It is found in the cytoplasm. The protein resides in the cytoskeleton. Its subcellular location is the cell junction. It localises to the tight junction. The protein localises to the golgi apparatus. It is found in the spindle. The protein resides in the cytoplasmic vesicle. In terms of biological role, activates Rho-GTPases by promoting the exchange of GDP for GTP. May be involved in epithelial barrier permeability, cell motility and polarization, dendritic spine morphology, antigen presentation, leukemic cell differentiation, cell cycle regulation, innate immune response, and cancer. Binds Rac-GTPases, but does not seem to promote nucleotide exchange activity toward Rac-GTPases. May stimulate instead the cortical activity of Rac. Inactive toward CDC42, TC10, or Ras-GTPases. Forms an intracellular sensing system along with NOD1 for the detection of microbial effectors during cell invasion by pathogens. Involved in innate immune signaling transduction pathway promoting cytokine IL6/interleukin-6 and TNF-alpha secretion in macrophage upon stimulation by bacterial peptidoglycans; acts as a signaling intermediate between NOD2 receptor and RIPK2 kinase. Contributes to the tyrosine phosphorylation of RIPK2 through Src tyrosine kinase leading to NF-kappaB activation by NOD2. Overexpression activates Rho-, but not Rac-GTPases, and increases paracellular permeability. Involved in neuronal progenitor cell division and differentiation. Involved in the migration of precerebellar neurons. In Mus musculus (Mouse), this protein is Rho guanine nucleotide exchange factor 2 (Arhgef2).